Consider the following 822-residue polypeptide: Putative pentatricopeptide repeat-containing protein At5g13230, mitochondrial (822 aa).

The N-terminal 70 residues, 1 to 70 (MIVFMRIIHV…QKNDPISAKA (70 aa)), are a transit peptide targeting the mitochondrion. PPR repeat units lie at residues 48-82 (DSHA…GSCL), 83-117 (DLFA…NNVS), 145-179 (NPHV…GYDS), 180-210 (NAFV…ILCK), 211-245 (DIVV…GFMP), 246-280 (NNYT…CYVL), 281-311 (DPRV…MPKN), 312-346 (DVVP…FVVP), 347-381 (NEFT…GFDL), 382-416 (DIYV…NEVS), 417-447 (WNTV…QVSV), 448-482 (TEVT…NNAK), 483-513 (KVAV…METI), 514-548 (DVAS…DCKP), 549-584 (NGLT…GIEP), and 585-619 (CLEH…PSVM). Positions 620–695 (IWRAMLSASM…EPGLSWIEHQ (76 aa)) are type E motif. Residues 696–726 (GDVHYFSVGLSDHPDMKLINGMLEWLNMKAT) are type E(+) motif. The interval 727–822 (RAGYVPDRNA…AGVCSCGDHW (96 aa)) is type DYW motif.

The protein belongs to the PPR family. PCMP-H subfamily.

The protein localises to the mitochondrion. The chain is Putative pentatricopeptide repeat-containing protein At5g13230, mitochondrial (PCMP-H89) from Arabidopsis thaliana (Mouse-ear cress).